We begin with the raw amino-acid sequence, 607 residues long: Chaperone protein HtpG (607 aa).

The tract at residues 1 to 323 (MKKEEKIFKA…CDSLSLNISR (323 aa)) is a; substrate-binding. The interval 324-534 (EILQQNAELQ…KGGLSLEMEK (211 aa)) is b. The interval 535 to 607 (TLSEMTNNND…FIKNLNSLIK (73 aa)) is c.

This sequence belongs to the heat shock protein 90 family. Homodimer.

The protein resides in the cytoplasm. Molecular chaperone. Has ATPase activity. This chain is Chaperone protein HtpG, found in Fusobacterium nucleatum subsp. nucleatum (strain ATCC 25586 / DSM 15643 / BCRC 10681 / CIP 101130 / JCM 8532 / KCTC 2640 / LMG 13131 / VPI 4355).